A 281-amino-acid chain; its full sequence is Putative rRNA methyltransferase YqxC (281 aa).

An S4 RNA-binding domain is found at 6 to 67 (ERLDVLLVER…NPLRYVSRGG (62 aa)).

Belongs to the TlyA family.

This is Putative rRNA methyltransferase YqxC (yqxC) from Bacillus subtilis (strain 168).